The primary structure comprises 1543 residues: MLEINEFNAIRISLASPEDILSWSHGEVTKPETINYRTLRPERDGLFCEKIFGPTRDWECYCGKYKRVRYKGIVCDKCGVEVTRSKVRRDRMGHIKLASPVSHIWFVKGTPSRLGLLLDISPRNLERVLYFASYIITDVDDLALGNVREQMKTDFGVRRKDLEEKIIEQRGEKATRLSKDLAAMDNAMEGTLERTHEQFARQRQEIEDEANALREHLEELIGIDALADEDIVYRGTVLLEENEPVRERSLEQLEQLIDQEREKLEQRREYEIENVRLLADGERDQRQSVADAEQERLTTALIKQLEDLNKEEKDKLDRLDDIQLHRIISENEYRILRDLAPYTFKADMGAGAVRDIVSMVDLDELSNQMQAEVQSSSGQRRKKATKRLRVVEAFRKSGNRPEWMIMTVLPVIPPDLRPMVQLDGGRFATSDLNDLYRRVINRNNRLKRLMELNAPEIIVRNEKRMLQEAVDALIDNGRRGRPVSGKGKHRLKSLSDMLKGKQGRFRQNLLGKRVDYSGRSVIVVGPTLQLHQCGLPKKMALELFKPFVMRRLVDKGFAHNIKSAKRFVERVRPEVWDVLEEVIKDYLVLLNRAPSLHRLSIQAFEAKLIEGSAIQLHPLVCAAFNADFDGDQMAVHVPLSRKAQEEARRRMISTYNLLSPATGDPIITPSQDIVLGCFYLTQVRPGAKGGGKRFGSIDEALLAYTNGVVHIQAPVWIVIEDYILPGSDLREKELPSLDGVTPRVLIETSVGRIIFNNALRYQGEPKAGENGYRSPLHYRNFLVGKSGLKALIADCYRFHSQRENIIADVYQELIERFGPETSEESLLRFYASERTARLADRIKALGFKHATLGGMTFSASDVEVPDTKDAIVQETYKKVQDIEKMQRRGLITDDERYREVVTAWLDATNQIKVEVQRSLNPFGPVSMMSTSGARGNVEQIRQMAGMRGLTTDPTGRIIELPITANFREGLSVIEYFISTHGGRKGLADTALRTADAGYLTRRLVDVAQDVIVTIEDCGTTEGMWIRVSRDILASVEDRIVGRVTVAPVTNPVTGEVIFDTDSEILEDDGKHIANVLKSLDKEAQAEFGIYVRSVLTCNADYGICRKCYGRNLATGKMVEIGEAVGIIAAQSIGEPGTQLTLRTFHTGGVATDTDITQGLPRVQEIFEARIPKGKAVLAQIAGRVQIVREEEGIRRLRIVSEEVYTDEQMLPKDYRVVVKNGDAVEIGNLLAESNVDGDGRAPLVAGLAGNVYVDDDRLVIQAKDIEEHEEVIAHAARLRVKDGDLVQVGQQMTEGSSDPQEMLQLRGREAVQEYLTNEAQKVYRSQGVGINDKHIEVIVRQMLRRVRIEEPGDTELLPGELVELHELNRINASIVSQGGDPALAVPVLLGITKASLSTDSFLSAASFQETTRVLTEAAVNGKIDYLRGLKENVVIGKLIPAGTGMEQRRKLAEEAALRVAQITSTPADREVPAATPAPAVMSEPKPAPPRSFDEALNAVTNIDSGNGPKDDLFAQAMARLQAEEGRKPTLSELLGTDEDEENV.

Residues C60, C62, C75, and C78 each coordinate Zn(2+). Mg(2+) is bound by residues D627, D629, and D631. Positions 1017, 1097, 1104, and 1107 each coordinate Zn(2+). Disordered stretches follow at residues 1466-1490 (PADR…APPR) and 1522-1543 (AEEG…EENV).

It belongs to the RNA polymerase beta' chain family. In terms of assembly, the RNAP catalytic core consists of 2 alpha, 1 beta, 1 beta' and 1 omega subunit. When a sigma factor is associated with the core the holoenzyme is formed, which can initiate transcription. Mg(2+) is required as a cofactor. The cofactor is Zn(2+).

It carries out the reaction RNA(n) + a ribonucleoside 5'-triphosphate = RNA(n+1) + diphosphate. In terms of biological role, DNA-dependent RNA polymerase catalyzes the transcription of DNA into RNA using the four ribonucleoside triphosphates as substrates. In Herpetosiphon aurantiacus (strain ATCC 23779 / DSM 785 / 114-95), this protein is DNA-directed RNA polymerase subunit beta'.